We begin with the raw amino-acid sequence, 201 residues long: uncharacterized protein (201 aa).

4 consecutive transmembrane segments (helical) span residues tyrosine 9–alanine 29, phenylalanine 42–valine 62, serine 86–valine 106, and leucine 126–methionine 146. 2 stretches are compositionally biased toward basic and acidic residues: residues glutamate 165–asparagine 174 and aspartate 182–glutamine 191. Residues glutamate 165 to leucine 201 form a disordered region. The span at serine 192 to leucine 201 shows a compositional bias: polar residues.

It localises to the cell membrane. This is an uncharacterized protein from Mycoplasma genitalium (strain ATCC 33530 / DSM 19775 / NCTC 10195 / G37) (Mycoplasmoides genitalium).